A 229-amino-acid chain; its full sequence is Germin-like protein 12-1 (229 aa).

Residues 1–22 form the signal peptide; sequence MASSNFFLPTALIALVATQAMA. An intrachain disulfide couples Cys32 to Cys47. A Cupin type-1 domain is found at 62 to 217; the sequence is ANLDKPMDTT…AFQVDKKAVD (156 aa). The N-linked (GlcNAc...) asparagine glycan is linked to Asn78. Mn(2+) contacts are provided by His111, His113, Glu118, and His162.

The protein belongs to the germin family. As to quaternary structure, oligomer (believed to be a pentamer but probably hexamer).

It is found in the secreted. Its subcellular location is the extracellular space. The protein localises to the apoplast. Functionally, may play a role in plant defense. Probably has no oxalate oxidase activity even if the active site is conserved. This chain is Germin-like protein 12-1, found in Oryza sativa subsp. japonica (Rice).